The sequence spans 343 residues: Methionine import ATP-binding protein MetN (343 aa).

The region spanning 2–241 is the ABC transporter domain; it reads IKLSNITKVF…PKTPLAQKFI (240 aa). 40–46 provides a ligand contact to ATP; sequence SGAGKST. The C2 domain stretch occupies residues 265-343; sequence CVPMLRLEFT…HVKVEVLGYV (79 aa). L-methionine contacts are provided by residues 278 to 283 and 295 to 296; these read VDAPLL and NI.

The protein belongs to the ABC transporter superfamily. Methionine importer (TC 3.A.1.24) family. In terms of assembly, the complex is composed of two ATP-binding proteins (MetN), two transmembrane proteins (MetI) and a solute-binding protein (MetQ).

It is found in the cell inner membrane. It catalyses the reaction L-methionine(out) + ATP + H2O = L-methionine(in) + ADP + phosphate + H(+). The enzyme catalyses D-methionine(out) + ATP + H2O = D-methionine(in) + ADP + phosphate + H(+). ATPase activity is inhibited by intracellular L-methionine. Binding of methionine to the dimerized C-terminal regulatory domain stabilizes an inward-facing, ATPase-inactive conformation of the transporter, and as a consequence, the rate of ATP hydrolysis decreases. ADP is a competitive inhibitor. Functionally, part of the ABC transporter complex MetNIQ involved in methionine import. Responsible for energy coupling to the transport system. It has also been shown to be involved in formyl-L-methionine transport. The protein is Methionine import ATP-binding protein MetN of Escherichia coli (strain K12).